We begin with the raw amino-acid sequence, 241 residues long: Phosphoadenosine 5'-phosphosulfate reductase (241 aa).

The segment at Gly-221–Ala-241 is disordered. The active-site Nucleophile; cysteine thiosulfonate intermediate is Cys-237.

Belongs to the PAPS reductase family. CysH subfamily.

The protein localises to the cytoplasm. The enzyme catalyses [thioredoxin]-disulfide + sulfite + adenosine 3',5'-bisphosphate + 2 H(+) = [thioredoxin]-dithiol + 3'-phosphoadenylyl sulfate. Its pathway is sulfur metabolism; hydrogen sulfide biosynthesis; sulfite from sulfate: step 3/3. Its function is as follows. Catalyzes the formation of sulfite from phosphoadenosine 5'-phosphosulfate (PAPS) using thioredoxin as an electron donor. This chain is Phosphoadenosine 5'-phosphosulfate reductase, found in Gloeobacter violaceus (strain ATCC 29082 / PCC 7421).